A 554-amino-acid polypeptide reads, in one-letter code: 3-(3-hydroxy-phenyl)propionate/3-hydroxycinnamic acid hydroxylase (554 aa).

Residues Gln17–Lys46 and Phe285–Asp295 each bind FAD.

It belongs to the PheA/TfdB FAD monooxygenase family. It depends on FAD as a cofactor.

The enzyme catalyses 3-(3-hydroxyphenyl)propanoate + NADH + O2 + H(+) = 3-(2,3-dihydroxyphenyl)propanoate + NAD(+) + H2O. The catalysed reaction is (2E)-3-(3-hydroxyphenyl)prop-2-enoate + NADH + O2 + H(+) = (2E)-3-(2,3-dihydroxyphenyl)prop-2-enoate + NAD(+) + H2O. The protein operates within aromatic compound metabolism; 3-phenylpropanoate degradation. Its function is as follows. Catalyzes the insertion of one atom of molecular oxygen into position 2 of the phenyl ring of 3-(3-hydroxyphenyl)propionate (3-HPP) and hydroxycinnamic acid (3HCI). The chain is 3-(3-hydroxy-phenyl)propionate/3-hydroxycinnamic acid hydroxylase from Escherichia coli (strain 55989 / EAEC).